Reading from the N-terminus, the 691-residue chain is Guanylate cyclase soluble subunit alpha-1 (691 aa).

A disordered region spans residues 26 to 65; sequence PREPLGEATGSGPASTPGQPGVCPGVPDKNPPGRLPRRKT. The region spanning 482–609 is the Guanylate cyclase domain; sequence TMLFSDIVGF…NNVTLANKFE (128 aa).

The protein belongs to the adenylyl cyclase class-4/guanylyl cyclase family. As to quaternary structure, heterodimer of an alpha and a beta chain.

It is found in the cytoplasm. The enzyme catalyses GTP = 3',5'-cyclic GMP + diphosphate. With respect to regulation, activated by nitric oxide in the presence of magnesium or manganese ions. The chain is Guanylate cyclase soluble subunit alpha-1 (GUCY1A1) from Bos taurus (Bovine).